The following is a 164-amino-acid chain: Ubiquitin-fold modifier-conjugating enzyme 1 (164 aa).

Catalysis depends on C116, which acts as the Glycyl thioester intermediate.

The protein belongs to the ubiquitin-conjugating enzyme family. UFC1 subfamily.

In terms of biological role, E2-like enzyme which forms an intermediate with UFM1 via a thioester linkage. The protein is Ubiquitin-fold modifier-conjugating enzyme 1 of Drosophila willistoni (Fruit fly).